We begin with the raw amino-acid sequence, 1112 residues long: Patronin (microtubule-binding protein) homolog (1112 aa).

Residues 165–286 (IDSVDALLFW…VNAFLADLFV (122 aa)) form the Calponin-homology (CH) domain. 4 disordered regions span residues 324–358 (AARS…SRMS), 485–504 (EGED…QPSV), 542–566 (MQQQ…PSQL), and 788–834 (NHSE…GSGE). 2 stretches are compositionally biased toward polar residues: residues 345 to 358 (SHSQ…SRMS) and 489 to 504 (GTQS…QPSV). Residues 542–557 (MQQQMQQQQQQQAQAQ) show a composition bias toward low complexity. Residues 802–816 (QNDRDDLSTGRKSDD) are compositionally biased toward basic and acidic residues. Residues 850 to 914 (ALIAKTMKRK…YKRKKLEKEL (65 aa)) adopt a coiled-coil conformation. The disordered stretch occupies residues 916 to 965 (AELSARSTGRGHSQPPFIRTKSQMSEVTESSRQNTPRMRGQSSVEQRVSV). Residues 935-951 (TKSQMSEVTESSRQNTP) are compositionally biased toward polar residues. Over residues 956-965 (QSSVEQRVSV) the composition is skewed to low complexity. A CKK domain is found at 972–1109 (THKLYAKTVT…RIPHSGTPAH (138 aa)).

This sequence belongs to the CAMSAP1 family. In terms of assembly, interacts with dapk-1. In terms of tissue distribution, expressed in larval and adult epidermis, intestine and pharynx. Broadly expressed in the nervous system. Expressed in body wall muscle cells.

It is found in the cell projection. The protein localises to the axon. The protein resides in the dendrite. Its subcellular location is the cell membrane. It localises to the sarcolemma. It is found in the cytoplasm. The protein localises to the cytosol. The protein resides in the cytoskeleton. Its subcellular location is the perikaryon. In terms of biological role, required for microtubule stability and anchorage by binding to the minus ends of microtubules. Acts redundantly with noca-1 to control circumferential microtubule assembly along the body which is necessary for larval development, viability, morphology and integrity of the epidermis. Promotes microtubule stability and polymerization in neurons. Involved in the maintenance of neurite morphology in ALM and PLM neurons. May play a role in synaptic protein localization in the PLM neuron. May act upstream of dlk-1 in neuronal regeneration. Plays a role in postembryonic epidermal tissue integrity and wound healing. This Caenorhabditis elegans protein is Patronin (microtubule-binding protein) homolog.